The following is a 387-amino-acid chain: 3-ketoacyl-CoA thiolase (387 aa).

C91 serves as the catalytic Acyl-thioester intermediate. Residues H343 and C373 each act as proton acceptor in the active site.

It belongs to the thiolase-like superfamily. Thiolase family. As to quaternary structure, heterotetramer of two alpha chains (FadB) and two beta chains (FadA).

The protein resides in the cytoplasm. The catalysed reaction is an acyl-CoA + acetyl-CoA = a 3-oxoacyl-CoA + CoA. It participates in lipid metabolism; fatty acid beta-oxidation. Functionally, catalyzes the final step of fatty acid oxidation in which acetyl-CoA is released and the CoA ester of a fatty acid two carbons shorter is formed. This chain is 3-ketoacyl-CoA thiolase, found in Klebsiella pneumoniae subsp. pneumoniae (strain ATCC 700721 / MGH 78578).